Reading from the N-terminus, the 92-residue chain is uncharacterized protein (92 aa).

Positions A25–G53 are disordered.

This is an uncharacterized protein from Treponema pallidum (strain Nichols).